A 562-amino-acid chain; its full sequence is MRTAMSCGGGLAQRLDFSSSDEEDGMSPGLEEGSHSNQRGSPVNSWRANNCPFPITPQRNERGLSPSQEELSPCSDYSPVPSDKGVGGECPGTPLHYSTWKKLKLCDTPYTPKSLLYKTLPSPGSRVQCRGQRLLRFVAGTGAELDDPALVNVNPFTPESYRQANFHPNGKRKERPEDDCSAEPQMKYAEKEHPAVFQSKRFVLRETNMVSRYKTEFLEIEKIGAGEFGSVFKCVKRLDGCFYAIKRSKKPLAGSTDEQLALREVYAHAVLGHHPHVVRYYSAWAEDDHMIIQNEYCNGGSLQDLIMENKKEGRFVPEQELKEILLQVSMGLKYIHSSGLVHMDIKPSNIFICRKQTEVGQDESDGEDDLSSASVLYKIGDLGHVTSILNPQVEEGDSRFLANEILQEDYRQLPKADIFALGLTITLAAGAGPLPCNEDSWHHIRKGNLPHIPQPLTPAFLALLKLLVHPDPVMRPPAVSLAKNSLLRRCVGKAAQLQKQLNVEKFKTAMLERELKAAKLAHGSGKDECSDLPPMSDFSCRGRKRLVGAKNARSLSFTCGGY.

Disordered stretches follow at residues 1-86 (MRTA…DKGV) and 161-181 (YRQA…DDCS). The span at 35 to 48 (HSNQRGSPVNSWRA) shows a compositional bias: polar residues. In terms of domain architecture, Protein kinase spans 217–491 (FLEIEKIGAG…AKNSLLRRCV (275 aa)). ATP contacts are provided by residues 223 to 231 (IGAGEFGSV) and Lys246. Asp344 functions as the Proton acceptor in the catalytic mechanism. Residues Asn349 and Asp381 each coordinate Mg(2+). Residues 494–520 (AAQLQKQLNVEKFKTAMLERELKAAKL) adopt a coiled-coil conformation.

The protein belongs to the protein kinase superfamily. Ser/Thr protein kinase family. WEE1 subfamily.

The protein resides in the nucleus. It catalyses the reaction L-tyrosyl-[protein] + ATP = O-phospho-L-tyrosyl-[protein] + ADP + H(+). Functionally, oocyte-specific protein tyrosine kinase that phosphorylates and inhibits cdk1 and acts as a regulator of meiosis. Required to maintain meiotic arrest in oocytes by phosphorylating cdk1 at 'Tyr-15', leading to inhibit cdk1 activity and prevent meiotic reentry. The chain is Wee1-like protein kinase 2 (wee2) from Xenopus tropicalis (Western clawed frog).